The primary structure comprises 92 residues: C-C motif chemokine 3 (92 aa).

Residues 1–23 (MKVSTAALAVLLCTMALWNEVFS) form the signal peptide. Intrachain disulfides connect Cys-34/Cys-57 and Cys-35/Cys-73.

It belongs to the intercrine beta (chemokine CC) family. As to quaternary structure, self-associates. Also heterodimer of MIP-1-alpha(4-69) and MIP-1-beta(3-69). Interacts with CCR1.

It is found in the secreted. Monokine with inflammatory and chemokinetic properties. Binds to CCR1, CCR4 and CCR5. One of the major HIV-suppressive factors produced by CD8+ T-cells. Recombinant MIP-1-alpha induces a dose-dependent inhibition of different strains of HIV-1, HIV-2, and simian immunodeficiency virus (SIV). The sequence is that of C-C motif chemokine 3 (Ccl3) from Rattus norvegicus (Rat).